A 414-amino-acid polypeptide reads, in one-letter code: Hydroxysqualene dehydroxylase (414 aa).

The protein belongs to the HpnE family.

The enzyme catalyses squalene + FAD + H2O + H(+) = hydroxysqualene + FADH2. It functions in the pathway secondary metabolite biosynthesis; hopanoid biosynthesis. Its function is as follows. Involved in the biosynthesis of the hopanoid precursor squalene (SQ) from farnesyl diphosphate (FPP). Catalyzes the third (last) step, the reduction of hydroxysqualene (HSQ) to SQ. This Zymomonas mobilis subsp. mobilis (strain ATCC 31821 / ZM4 / CP4) protein is Hydroxysqualene dehydroxylase.